A 423-amino-acid polypeptide reads, in one-letter code: Polyglutamylase complex subunit TTLL1 (423 aa).

The TTL domain maps to 1 to 367; the sequence is MAGRVKWVTD…NGEIPDCKWN (367 aa). Residues Lys-138, 144-145, 181-184, and 194-196 each bind ATP; these read QG, SLYI, and KFD. Gln-144 is an a protein binding site. Residue Arg-220 participates in L-glutamate binding. Residue 241–242 participates in ATP binding; it reads TN. An L-glutamate-binding site is contributed by Lys-259. Mg(2+) contacts are provided by Asp-313, Glu-326, and Asn-328. An L-glutamate-binding site is contributed by Lys-344. A disordered region spans residues 390–423; the sequence is DGAERELRSRPGQPVGPRTGRSRDSGRNVLTTWK.

It belongs to the tubulin polyglutamylase family. In terms of assembly, part of the neuronal tubulin polyglutamylase complex which contains TPGS1, TPGS2, TTLL1, LRRC49 and NICN1. Interacts with PCM1, CSTPP1 and LRRC49. Mg(2+) is required as a cofactor.

It is found in the cytoplasm. It localises to the cytoskeleton. The protein localises to the cilium basal body. Its subcellular location is the cilium axoneme. The protein resides in the cell projection. It is found in the cilium. It localises to the flagellum. The catalysed reaction is (L-glutamyl)(n)-gamma-L-glutamyl-L-glutamyl-[protein] + L-glutamate + ATP = (L-glutamyl)(n+1)-gamma-L-glutamyl-L-glutamyl-[protein] + ADP + phosphate + H(+). In terms of biological role, catalytic subunit of a polyglutamylase complex which modifies tubulin, generating side chains of glutamate on the gamma-carboxyl group of specific glutamate residues within the C-terminal tail of tubulin. Probably involved in the side-chain elongation step of the polyglutamylation reaction rather than the initiation step. Modifies both alpha- and beta-tubulins with a preference for the alpha-tail. Unlike most polyglutamylases of the tubulin--tyrosine ligase family, only displays a catalytic activity when in complex with other proteins as it is most likely lacking domains important for autonomous activity. Part of the neuronal tubulin polyglutamylase complex. Mediates cilia and flagella polyglutamylation which is essential for their biogenesis and motility. Involved in respiratory motile cilia function through the regulation of beating asymmetry. Essential for sperm flagella biogenesis, motility and male fertility. Involved in KLF4 glutamylation which impedes its ubiquitination, thereby leading to somatic cell reprogramming, pluripotency maintenance and embryogenesis. In Rattus norvegicus (Rat), this protein is Polyglutamylase complex subunit TTLL1 (Ttll1).